A 211-amino-acid polypeptide reads, in one-letter code: Beta-crystallin B3 (211 aa).

At Met-1 the chain carries N-acetylmethionine. The residue at position 2 (Ala-2) is an N-acetylalanine; in Beta-crystallin B3, N-terminally processed. The interval 2-23 (AEQHGAPEQAAASKSHGGLGGS) is N-terminal arm. 2 Beta/gamma crystallin 'Greek key' domains span residues 24-63 (YKVT…QVES) and 64-108 (GPWL…RPLH). The tract at residues 109 to 113 (IDGPD) is connecting peptide. 2 Beta/gamma crystallin 'Greek key' domains span residues 114–155 (HKLH…RVIN) and 156–198 (GTWV…RRIR). The interval 200-211 (QKWHKRGCFLSS) is C-terminal arm.

It belongs to the beta/gamma-crystallin family. As to quaternary structure, homo/heterodimer, or complexes of higher-order. The structure of beta-crystallin oligomers seems to be stabilized through interactions between the N-terminal arms.

Crystallins are the dominant structural components of the vertebrate eye lens. This Rattus norvegicus (Rat) protein is Beta-crystallin B3 (Crybb3).